A 609-amino-acid polypeptide reads, in one-letter code: Pogo transposable element with KRAB domain (609 aa).

Disordered regions lie at residues 1 to 28 and 100 to 127; these read MEST…ELED and EGEE…SDVK. Residues 8-28 adopt a coiled-coil conformation; sequence LNLSLKEEEEEEEIQSRELED. Lys13 is covalently cross-linked (Glycyl lysine isopeptide (Lys-Gly) (interchain with G-Cter in SUMO2)). Residues 47 to 118 enclose the KRAB domain; it reads ALFDEVAIYF…DEWQLQGGTS (72 aa). Over residues 108–119 the composition is skewed to polar residues; the sequence is SDEWQLQGGTSA. The HTH CENPB-type domain maps to 250-323; the sequence is AFRGPKNGRF…MRRYDLSLRH (74 aa). Residues 353 to 567 enclose the DDE-1 domain; it reads HDYEVAQMGN…ISSESIVQGF (215 aa). A Glycyl lysine isopeptide (Lys-Gly) (interchain with G-Cter in SUMO2) cross-link involves residue Lys384. Residues 588-609 are disordered; the sequence is SELPGGGEPPKDCDTESMAESN.

It localises to the nucleus. The polypeptide is Pogo transposable element with KRAB domain (POGK) (Homo sapiens (Human)).